A 33-amino-acid chain; its full sequence is Cecropin-C (33 aa).

Residue lysine 21 is modified to 5-hydroxylysine.

In terms of assembly, monomer. Hemolymph.

It localises to the secreted. Cecropins have lytic and antibacterial activity against several Gram-positive and Gram-negative bacteria. Also has activity against fungi. This is Cecropin-C from Heliothis virescens (Tobacco budworm moth).